Here is a 597-residue protein sequence, read N- to C-terminus: NADPH-dependent diflavin oxidoreductase 1 (597 aa).

Residues 6 to 150 enclose the Flavodoxin-like domain; it reads LLVLFGSQTG…AIDPWLQDLW (145 aa). FMN-binding positions include 12-17, 59-62, 97-106, and Asp132; these read SQTGTA, ATTG, and LGDSSYAKFN. The 241-residue stretch at 206-446 folds into the FAD-binding FR-type domain; sequence LQPFLAPMVS…WVRSGGLTFP (241 aa). FAD-binding positions include Arg350, 382 to 385, and 416 to 419; these read RAFS and GLCS. NADP(+) is bound by residues Thr460, 515–516, 521–525, and Asp558; these read SR and KVYVQ. Trp596 serves as a coordination point for FAD.

It belongs to the NADPH-dependent diflavin oxidoreductase NDOR1 family. The protein in the N-terminal section; belongs to the flavodoxin family. In the C-terminal section; belongs to the flavoprotein pyridine nucleotide cytochrome reductase family. In terms of assembly, interacts with CIAPIN1; as part of the cytosolic iron-sulfur (Fe-S) protein assembly (CIA) machinery. Interacts with DCPS. FAD is required as a cofactor. FMN serves as cofactor.

It is found in the cytoplasm. Its subcellular location is the perinuclear region. It carries out the reaction 2 oxidized [2Fe-2S]-[protein] + NADPH = 2 reduced [2Fe-2S]-[protein] + NADP(+) + H(+). In terms of biological role, NADPH-dependent reductase which is a central component of the cytosolic iron-sulfur (Fe-S) protein assembly (CIA) machinery. Transfers electrons from NADPH via its FAD and FMN prosthetic groups to the [2Fe-2S] cluster of CIAPIN1, another key component of the CIA machinery. In turn, this reduced cluster provides electrons for assembly of cytosolic iron-sulfur cluster proteins. It can also reduce the [2Fe-2S] cluster of CISD1 and activate this protein implicated in Fe/S cluster repair. In vitro can fully activate methionine synthase/MTR in the presence of soluble cytochrome b5/CYB5A. This is NADPH-dependent diflavin oxidoreductase 1 from Bos taurus (Bovine).